A 224-amino-acid chain; its full sequence is GrpE protein homolog 2, mitochondrial (224 aa).

The transit peptide at 1-31 directs the protein to the mitochondrion; that stretch reads MAARSLWAVQRLQRLLASGAMSESRGWLHPF. Position 141 is an N6-acetyllysine (lysine 141).

The protein belongs to the GrpE family. As to quaternary structure, probable component of the PAM complex at least composed of a mitochondrial HSP70 protein, GRPEL1 or GRPEL2, TIMM44, TIMM16/PAM16 and TIMM14/DNAJC19. Ubiquitous.

It localises to the mitochondrion matrix. Its function is as follows. Essential component of the PAM complex, a complex required for the translocation of transit peptide-containing proteins from the inner membrane into the mitochondrial matrix in an ATP-dependent manner. Seems to control the nucleotide-dependent binding of mitochondrial HSP70 to substrate proteins. Stimulates ATPase activity of mt-HSP70. May also serve to modulate the interconversion of oligomeric (inactive) and monomeric (active) forms of mt-HSP70. The protein is GrpE protein homolog 2, mitochondrial (Grpel2) of Mus musculus (Mouse).